We begin with the raw amino-acid sequence, 207 residues long: Dephospho-CoA kinase (207 aa).

The region spanning 10–207 (ILGLTGGIGS…FYLTLRGGQS (198 aa)) is the DPCK domain. 18 to 23 (GSGKSA) lines the ATP pocket.

The protein belongs to the CoaE family.

It is found in the cytoplasm. It carries out the reaction 3'-dephospho-CoA + ATP = ADP + CoA + H(+). It functions in the pathway cofactor biosynthesis; coenzyme A biosynthesis; CoA from (R)-pantothenate: step 5/5. Its function is as follows. Catalyzes the phosphorylation of the 3'-hydroxyl group of dephosphocoenzyme A to form coenzyme A. The protein is Dephospho-CoA kinase of Pseudomonas savastanoi pv. phaseolicola (strain 1448A / Race 6) (Pseudomonas syringae pv. phaseolicola (strain 1448A / Race 6)).